We begin with the raw amino-acid sequence, 363 residues long: Histidinol-phosphate aminotransferase (363 aa).

Position 218 is an N6-(pyridoxal phosphate)lysine (Lys218).

The protein belongs to the class-II pyridoxal-phosphate-dependent aminotransferase family. Histidinol-phosphate aminotransferase subfamily. As to quaternary structure, homodimer. Pyridoxal 5'-phosphate is required as a cofactor.

It catalyses the reaction L-histidinol phosphate + 2-oxoglutarate = 3-(imidazol-4-yl)-2-oxopropyl phosphate + L-glutamate. It participates in amino-acid biosynthesis; L-histidine biosynthesis; L-histidine from 5-phospho-alpha-D-ribose 1-diphosphate: step 7/9. This chain is Histidinol-phosphate aminotransferase, found in Xanthomonas axonopodis pv. citri (strain 306).